We begin with the raw amino-acid sequence, 299 residues long: tRNA dimethylallyltransferase (299 aa).

13-20 (GPTASGKT) provides a ligand contact to ATP. 15-20 (TASGKT) provides a ligand contact to substrate. The interval 38–41 (DSRQ) is interaction with substrate tRNA.

The protein belongs to the IPP transferase family. In terms of assembly, monomer. It depends on Mg(2+) as a cofactor.

The enzyme catalyses adenosine(37) in tRNA + dimethylallyl diphosphate = N(6)-dimethylallyladenosine(37) in tRNA + diphosphate. Its function is as follows. Catalyzes the transfer of a dimethylallyl group onto the adenine at position 37 in tRNAs that read codons beginning with uridine, leading to the formation of N6-(dimethylallyl)adenosine (i(6)A). The chain is tRNA dimethylallyltransferase from Prochlorococcus marinus (strain MIT 9515).